The chain runs to 275 residues: Adaptin ear-binding coat-associated protein 1 (275 aa).

The interval 168 to 275 (AKKGGASKPR…APQPSNWVQF (108 aa)) is disordered. Over residues 187-201 (LPPPPGGKVTIPPPS) the composition is skewed to pro residues. Threonine 211 is subject to Phosphothreonine. Positions 233 to 248 (SPAPVSTSAPAPVSTS) are enriched in low complexity. 2 short sequence motifs (WXXF motif) span residues 252–255 (WGDF) and 272–275 (WVQF). The span at 256-275 (STASSSVPNQAPQPSNWVQF) shows a compositional bias: polar residues.

It belongs to the NECAP family. In terms of assembly, interacts with AP1G1 and AP2A1 components of the adapter protein complexes AP-1 and AP-2. Interacts with the GAE domain proteins GGA1, GGA2 and GGA3. As to expression, expressed primarily in brain (at protein level).

The protein resides in the cytoplasmic vesicle. It is found in the clathrin-coated vesicle membrane. The protein localises to the cell membrane. Functionally, involved in endocytosis. The polypeptide is Adaptin ear-binding coat-associated protein 1 (Necap1) (Mus musculus (Mouse)).